The chain runs to 673 residues: Acetate--CoA ligase [ADP-forming] II (673 aa).

An ATP-grasp domain is found at 9–45 (KALLEKYGIKTAKCIFCETEEQAVKAAKEIGFPVVMK). Residue 35 to 46 (AKEIGFPVVMKV) coordinates ATP.

In the N-terminal section; belongs to the acetate CoA ligase beta subunit family. This sequence in the C-terminal section; belongs to the acetate CoA ligase alpha subunit family. In terms of assembly, homodimer.

It carries out the reaction acetate + ATP + CoA = acetyl-CoA + ADP + phosphate. Its activity is regulated as follows. Activity requires divalent metal cations. Catalyzes the reversible conversion of a variety of acids to the corresponding acyl-CoA esters. Shows the highest activity with the aryl acids, indoleacetate and phenylacetate, as compared to acetate. In the reverse direction, phenylacetyl-CoA is the best substrate. Seems to be involved primarily in the degradation of aryl-CoA esters to the corresponding acids. Participates in the degradation of branched-chain amino acids via branched-chain-acyl-CoA esters. The sequence is that of Acetate--CoA ligase [ADP-forming] II from Archaeoglobus fulgidus (strain ATCC 49558 / DSM 4304 / JCM 9628 / NBRC 100126 / VC-16).